We begin with the raw amino-acid sequence, 201 residues long: UPF0301 protein Atu0781 (201 aa).

It belongs to the UPF0301 (AlgH) family.

The sequence is that of UPF0301 protein Atu0781 from Agrobacterium fabrum (strain C58 / ATCC 33970) (Agrobacterium tumefaciens (strain C58)).